Consider the following 373-residue polypeptide: Putative 8-amino-7-oxononanoate synthase (373 aa).

Arg18 contacts substrate. Pyridoxal 5'-phosphate is bound at residue 93-94 (GF). His118 is a binding site for substrate. Pyridoxal 5'-phosphate contacts are provided by residues Ser166, 191–194 (DEAH), and 220–223 (TLSK). Lys223 carries the N6-(pyridoxal phosphate)lysine modification. Thr337 serves as a coordination point for substrate.

Belongs to the class-II pyridoxal-phosphate-dependent aminotransferase family. BioF subfamily. In terms of assembly, homodimer. It depends on pyridoxal 5'-phosphate as a cofactor.

It catalyses the reaction 6-carboxyhexanoyl-[ACP] + L-alanine + H(+) = (8S)-8-amino-7-oxononanoate + holo-[ACP] + CO2. Its pathway is cofactor biosynthesis; biotin biosynthesis. Functionally, catalyzes the decarboxylative condensation of pimeloyl-[acyl-carrier protein] and L-alanine to produce 8-amino-7-oxononanoate (AON), [acyl-carrier protein], and carbon dioxide. The polypeptide is Putative 8-amino-7-oxononanoate synthase (bioF) (Aquifex aeolicus (strain VF5)).